The primary structure comprises 831 residues: Prolactin receptor (831 aa).

The N-terminal stretch at 1 to 23 (MKQDLISSVQIILFLPLTTVGLA) is a signal peptide. At 24-438 (GQSFPGKPKI…QIPNDFRVKD (415 aa)) the chain is on the extracellular side. 4 Fibronectin type-III domains span residues 30 to 128 (KPKI…VQPG), 129 to 227 (SPVN…IPSG), 230 to 331 (PPEK…VQPD), and 332 to 433 (PPVN…IPND). Cysteines 36 and 46 form a disulfide. A glycan (N-linked (GlcNAc...) asparagine) is linked at Asn59. A disulfide bond links Cys75 and Cys86. N-linked (GlcNAc...) asparagine glycosylation is found at Asn91, Asn100, Asn112, Asn132, Asn262, Asn303, Asn315, and Asn335. Zn(2+) is bound by residues Asp414 and His416. The WSXWS motif signature appears at 419-423 (WSEWS). A helical transmembrane segment spans residues 439–459 (MIVWIVLGVLSSLICLIMSWT). Topologically, residues 460–831 (MVLKGYRMIT…DPSSFMPSFK (372 aa)) are cytoplasmic. The short motif at 471 to 479 (MLPPVPGPK) is the Box 1 motif element. Disordered regions lie at residues 527–563 (QQLM…SPSL), 774–796 (RVPH…QQGQ), and 808–831 (PSDC…PSFK). The span at 787–796 (ETSQSLQQGQ) shows a compositional bias: polar residues.

The protein belongs to the type I cytokine receptor family. Type 1 subfamily.

It localises to the membrane. Functionally, this is a receptor for the anterior pituitary hormone prolactin. The protein is Prolactin receptor (PRLR) of Gallus gallus (Chicken).